The following is a 764-amino-acid chain: Kinesin-like protein KIN-14N (764 aa).

The disordered stretch occupies residues 1–50 (MSTRATRPGMLHQKENAADAQAGKRQRTAAGSAARAPLSANAAPPAPDPA). A compositionally biased stretch (low complexity) spans 29 to 50 (AAGSAARAPLSANAAPPAPDPA). Residues 105–416 (AEIGKLNGLL…RLHNTILELK (312 aa)) adopt a coiled-coil conformation. Residues 418–747 (NIRVFCRVRP…LRFAARVNSC (330 aa)) enclose the Kinesin motor domain. 498-505 (GQTGSGKT) is a binding site for ATP.

This sequence belongs to the TRAFAC class myosin-kinesin ATPase superfamily. Kinesin family. KIN-14 subfamily.

This Oryza sativa subsp. japonica (Rice) protein is Kinesin-like protein KIN-14N.